A 292-amino-acid chain; its full sequence is Coiled-coil domain-containing protein 137 (292 aa).

Positions 1 to 16 are enriched in low complexity; it reads MAGLRRGAAAVAPAGT. Disordered stretches follow at residues 1-94, 139-183, 205-243, and 263-292; these read MAGL…AQAA, FLSK…EKAA, PELTAKPRMSVSRDQPGKKSLMLKKLLSPGSVSQPLTTS, and ALKRLQQQRQETQSPQPPHLPPGKKPEMQL. Composition is skewed to basic and acidic residues over residues 57 to 78, 155 to 164, and 173 to 183; these read KNQDEQEIPFRLREIMRSRQEM, PKKEKSERKK, and KARQRREEKAA. A coiled-coil region spans residues 156–194; that stretch reads KKEKSERKKAFQKRRLDKARQRREEKAAERLEQELLQDT. Positions 222 to 232 are enriched in low complexity; that stretch reads KKSLMLKKLLS. Ser-232 bears the Phosphoserine mark. Polar residues predominate over residues 234 to 243; it reads GSVSQPLTTS. Residues 247–276 are a coiled coil; the sequence is QRIVAEERERAVNAYRALKRLQQQRQETQS.

It localises to the chromosome. The polypeptide is Coiled-coil domain-containing protein 137 (CCDC137) (Bos taurus (Bovine)).